The sequence spans 199 residues: Inner membrane protein E199L (199 aa).

Asn131 carries an N-linked (GlcNAc...) asparagine; by host glycan. The helical transmembrane segment at 150–170 threads the bilayer; that stretch reads INVMNHPFLTLILIILILVII.

Belongs to the asfivirus E199L family. In terms of assembly, interacts with host PYCR2; this interaction results in autophagy activation.

The protein resides in the virion membrane. It localises to the host membrane. In terms of biological role, essential for viral fusion with host endosomal membrane and core release. Not required for virus morphogenesis and egress. Induces complete autophagy through the interaction with and down-regulation of host PYCR2. The protein is Inner membrane protein E199L of African swine fever virus (isolate Pig/Kenya/KEN-50/1950) (ASFV).